Here is a 548-residue protein sequence, read N- to C-terminus: Malate:quinone oxidoreductase (548 aa).

Residues 521 to 548 form a disordered region; the sequence is DKPQAADSTPKPQLKPQPVQKEVADIAL. The span at 530-541 shows a compositional bias: low complexity; it reads PKPQLKPQPVQK.

This sequence belongs to the MQO family. It depends on FAD as a cofactor.

The enzyme catalyses (S)-malate + a quinone = a quinol + oxaloacetate. Its pathway is carbohydrate metabolism; tricarboxylic acid cycle; oxaloacetate from (S)-malate (quinone route): step 1/1. The protein is Malate:quinone oxidoreductase (mqo) of Escherichia coli (strain K12).